Consider the following 76-residue polypeptide: Acyl carrier protein (76 aa).

Positions 1–74 (MEERIKEIIA…DVINYIKEKK (74 aa)) constitute a Carrier domain. Serine 34 carries the O-(pantetheine 4'-phosphoryl)serine modification.

Belongs to the acyl carrier protein (ACP) family. 4'-phosphopantetheine is transferred from CoA to a specific serine of apo-ACP by AcpS. This modification is essential for activity because fatty acids are bound in thioester linkage to the sulfhydryl of the prosthetic group.

The protein localises to the cytoplasm. It functions in the pathway lipid metabolism; fatty acid biosynthesis. Carrier of the growing fatty acid chain in fatty acid biosynthesis. This chain is Acyl carrier protein, found in Persephonella marina (strain DSM 14350 / EX-H1).